Consider the following 490-residue polypeptide: Betaine aldehyde dehydrogenase (490 aa).

K(+) contacts are provided by Ser-26, Ile-27, and Asp-93. Residue 150–152 participates in NAD(+) binding; the sequence is GAW. The active-site Charge relay system is the Lys-162. An NAD(+)-binding site is contributed by 176–179; sequence KPSE. Val-180 is a K(+) binding site. 230-233 provides a ligand contact to NAD(+); that stretch reads GTDT. K(+) is bound at residue Leu-246. The active-site Proton acceptor is Glu-252. 3 residues coordinate NAD(+): Gly-254, Cys-286, and Glu-387. The Nucleophile role is filled by Cys-286. Cysteine sulfenic acid (-SOH) is present on Cys-286. Positions 457 and 460 each coordinate K(+). Residue Glu-464 is the Charge relay system of the active site.

This sequence belongs to the aldehyde dehydrogenase family. In terms of assembly, dimer of dimers. The cofactor is K(+).

The enzyme catalyses betaine aldehyde + NAD(+) + H2O = glycine betaine + NADH + 2 H(+). The protein operates within amine and polyamine biosynthesis; betaine biosynthesis via choline pathway; betaine from betaine aldehyde: step 1/1. In terms of biological role, involved in the biosynthesis of the osmoprotectant glycine betaine. Catalyzes the irreversible oxidation of betaine aldehyde to the corresponding acid. The sequence is that of Betaine aldehyde dehydrogenase from Pseudomonas syringae pv. tomato (strain ATCC BAA-871 / DC3000).